The primary structure comprises 100 residues: Small ribosomal subunit protein uS14 (100 aa).

The protein belongs to the universal ribosomal protein uS14 family. As to quaternary structure, part of the 30S ribosomal subunit. Contacts proteins S3 and S10.

Binds 16S rRNA, required for the assembly of 30S particles and may also be responsible for determining the conformation of the 16S rRNA at the A site. In Parasynechococcus marenigrum (strain WH8102), this protein is Small ribosomal subunit protein uS14.